Consider the following 151-residue polypeptide: Probable cGMP 3',5'-cyclic phosphodiesterase subunit delta (151 aa).

Belongs to the PDE6D/unc-119 family. Interacts with Pde6.

The protein resides in the nucleus. It is found in the cytoplasm. The sequence is that of Probable cGMP 3',5'-cyclic phosphodiesterase subunit delta from Drosophila simulans (Fruit fly).